The chain runs to 116 residues: Protein Wnt-5(III) (116 aa).

Ser-1 carries O-palmitoleoyl serine; by PORCN lipidation. The N-linked (GlcNAc...) asparagine glycan is linked to Asn-69. Cys-82 and Cys-97 are joined by a disulfide.

Belongs to the Wnt family. Post-translationally, palmitoleoylation is required for efficient binding to frizzled receptors. Depalmitoleoylation leads to Wnt signaling pathway inhibition.

The protein resides in the secreted. Its subcellular location is the extracellular space. The protein localises to the extracellular matrix. In terms of biological role, ligand for members of the frizzled family of seven transmembrane receptors. Probable developmental protein. May be a signaling molecule which affects the development of discrete regions of tissues. Is likely to signal over only few cell diameters. The sequence is that of Protein Wnt-5(III) (WNT-5(III)) from Eptatretus stoutii (Pacific hagfish).